The following is a 496-amino-acid chain: UDP-glycosyltransferase 73C4 (496 aa).

UDP-alpha-D-glucose is bound by residues Ser297, 357-359, 374-382, and 396-399; these read SPQ, HCGWNSTLE, and FGDQ. Residues 450–475 form a disordered region; it reads SDDAKERRRRVKELGESAHKAVEEGG. The span at 451 to 472 shows a compositional bias: basic and acidic residues; that stretch reads DDAKERRRRVKELGESAHKAVE.

It belongs to the UDP-glycosyltransferase family.

In Arabidopsis thaliana (Mouse-ear cress), this protein is UDP-glycosyltransferase 73C4 (UGT73C4).